We begin with the raw amino-acid sequence, 117 residues long: Probable non-functional immunoglobulin heavy variable 1-38-4 (117 aa).

A signal peptide spans 1–19 (MDWNWRILFLVVATTGAHS). The framework-1 stretch occupies residues 20 to 44 (QVQLVQSWAEVRKSGASVKVSCSFS). The Ig-like domain maps to 20 to 117 (QVQLVQSWAE…EDMAVYYYAR (98 aa)). The segment at 45–52 (GFTITSYG) is complementarity-determining-1. The framework-2 stretch occupies residues 53–69 (IHWVQQSPGQGLEWMGW). Residues 70-77 (INPGNGSP) are complementarity-determining-2. N74 carries an N-linked (GlcNAc...) asparagine glycan. A framework-3 region spans residues 78–115 (SYAKKFQGRFTMTRDMSTTTAYTDLSSLTSEDMAVYYY). Positions 116–117 (AR) are complementarity-determining-3.

Most probably, the immunoglobulin is not assembled due to incorrect folding of heavy chain. Immunoglobulins are composed of two identical heavy chains and two identical light chains; disulfide-linked.

It is found in the secreted. Its subcellular location is the cell membrane. Its function is as follows. Probable non-functional open reading frame (ORF) of V region of the variable domain of immunoglobulin heavy chains. Non-functional ORF generally cannot participate in the synthesis of a productive immunoglobulin chain due to altered V-(D)-J or switch recombination and/or splicing site (at mRNA level) and/or conserved amino acid change (protein level). Immunoglobulins, also known as antibodies, are membrane-bound or secreted glycoproteins produced by B lymphocytes. In the recognition phase of humoral immunity, the membrane-bound immunoglobulins serve as receptors which, upon binding of a specific antigen, trigger the clonal expansion and differentiation of B lymphocytes into immunoglobulins-secreting plasma cells. Secreted immunoglobulins mediate the effector phase of humoral immunity, which results in the elimination of bound antigens. The antigen binding site is formed by the variable domain of one heavy chain, together with that of its associated light chain. Thus, each immunoglobulin has two antigen binding sites with remarkable affinity for a particular antigen. The variable domains are assembled by a process called V-(D)-J rearrangement and can then be subjected to somatic hypermutations which, after exposure to antigen and selection, allow affinity maturation for a particular antigen. The sequence is that of Probable non-functional immunoglobulin heavy variable 1-38-4 from Homo sapiens (Human).